The chain runs to 504 residues: D-alanine--D-alanyl carrier protein ligase (504 aa).

152–153 provides a ligand contact to ATP; sequence TS. D197 lines the D-alanine pocket. Position 292-297 (292-297) interacts with ATP; that stretch reads NTYGPT. D-alanine is bound at residue V301. ATP is bound by residues D383, 394-397, and K492; that span reads YNGR. A D-alanine-binding site is contributed by K492.

The protein belongs to the ATP-dependent AMP-binding enzyme family. DltA subfamily.

It is found in the cytoplasm. It carries out the reaction holo-[D-alanyl-carrier protein] + D-alanine + ATP = D-alanyl-[D-alanyl-carrier protein] + AMP + diphosphate. The protein operates within cell wall biogenesis; lipoteichoic acid biosynthesis. In terms of biological role, catalyzes the first step in the D-alanylation of lipoteichoic acid (LTA), the activation of D-alanine and its transfer onto the D-alanyl carrier protein (Dcp) DltC. In an ATP-dependent two-step reaction, forms a high energy D-alanyl-AMP intermediate, followed by transfer of the D-alanyl residue as a thiol ester to the phosphopantheinyl prosthetic group of the Dcp. D-alanylation of LTA plays an important role in modulating the properties of the cell wall in Gram-positive bacteria, influencing the net charge of the cell wall. This is D-alanine--D-alanyl carrier protein ligase from Bacillus cereus (strain ZK / E33L).